The chain runs to 232 residues: Orotidine 5'-phosphate decarboxylase (232 aa).

Substrate-binding positions include aspartate 11, lysine 32, 59–68 (DLKLHDIPHT), threonine 116, arginine 178, glutamine 188, glycine 208, and arginine 209. The active-site Proton donor is the lysine 61.

It belongs to the OMP decarboxylase family. Type 1 subfamily. In terms of assembly, homodimer.

The enzyme catalyses orotidine 5'-phosphate + H(+) = UMP + CO2. It functions in the pathway pyrimidine metabolism; UMP biosynthesis via de novo pathway; UMP from orotate: step 2/2. In terms of biological role, catalyzes the decarboxylation of orotidine 5'-monophosphate (OMP) to uridine 5'-monophosphate (UMP). This is Orotidine 5'-phosphate decarboxylase from Synechococcus sp. (strain JA-3-3Ab) (Cyanobacteria bacterium Yellowstone A-Prime).